The following is a 57-amino-acid chain: uncharacterized protein (57 aa).

The disordered stretch occupies residues 26 to 57 (VVSTRKRLKQNTNTPPHYDTSEDEDEDNYYNY). Residues 46–57 (SEDEDEDNYYNY) are compositionally biased toward acidic residues.

This is an uncharacterized protein from Autographa californica nuclear polyhedrosis virus (AcMNPV).